Reading from the N-terminus, the 187-residue chain is Putative manganese efflux pump MntP (187 aa).

6 consecutive transmembrane segments (helical) span residues 3-23 (WLTI…VALA), 39-59 (LGFH…LLGM), 65-85 (ISAY…GRMV), 103-123 (GMTM…VGLS), 124-144 (IAML…VAGV), and 166-186 (ICGG…HTLL).

This sequence belongs to the MntP (TC 9.B.29) family.

The protein resides in the cell inner membrane. Probably functions as a manganese efflux pump. The protein is Putative manganese efflux pump MntP of Geobacter sp. (strain M21).